The sequence spans 494 residues: Cytochrome P450 2B11 (494 aa).

Residue Ser-128 is modified to Phosphoserine; by PKA. Residue Cys-436 participates in heme binding.

It belongs to the cytochrome P450 family. Requires heme as cofactor.

The protein localises to the endoplasmic reticulum membrane. The protein resides in the microsome membrane. It carries out the reaction an organic molecule + reduced [NADPH--hemoprotein reductase] + O2 = an alcohol + oxidized [NADPH--hemoprotein reductase] + H2O + H(+). Its function is as follows. Cytochromes P450 are a group of heme-thiolate monooxygenases. In liver microsomes, this enzyme is involved in an NADPH-dependent electron transport pathway. This isozyme seems responsible for metabolism of 2,2',4,4',5,5'-hexachlorobiphenyl. This chain is Cytochrome P450 2B11 (CYP2B11), found in Canis lupus familiaris (Dog).